Here is a 353-residue protein sequence, read N- to C-terminus: Phosphate acyltransferase (353 aa).

The protein belongs to the PlsX family. As to quaternary structure, homodimer. Probably interacts with PlsY.

Its subcellular location is the cytoplasm. It catalyses the reaction a fatty acyl-[ACP] + phosphate = an acyl phosphate + holo-[ACP]. It participates in lipid metabolism; phospholipid metabolism. Functionally, catalyzes the reversible formation of acyl-phosphate (acyl-PO(4)) from acyl-[acyl-carrier-protein] (acyl-ACP). This enzyme utilizes acyl-ACP as fatty acyl donor, but not acyl-CoA. This is Phosphate acyltransferase from Nitrosospira multiformis (strain ATCC 25196 / NCIMB 11849 / C 71).